Here is a 370-residue protein sequence, read N- to C-terminus: MLISIAFLLVLCLLNYSSFRMLKSFLTLKKISRYAYLGFFILLSAGEATFVFYRNVMPSHLFVLTSACSFVSFIAFVFSLSFYGFSYSVEKIDFLPSRRKGLKNFLRIGFYLALLGYFWRGFYEGLARPKIKETPIYLDKLDKELKIILLTDMHVGSLLQKDFVNYIVEEVNQKEVDMVLIGGDLVDENIEKVKSFLLPLNNLKSTHGTFYVPGNHEYYHGIEPILSFLNTLDMTILGNECVHLGGINLCGVYDYFARKRQDFAPDIDKALKKRDSSKPTILLAHQPKQIRSLKESHSIDLVLSGHTHAGQIFPFSLLVKLAQTYLHGLYKHSGTTQIYVSSGAGYWGIPLRFLAPSEIAYLRLLPKNQA.

6 residues coordinate a divalent metal cation: aspartate 152, histidine 154, aspartate 184, asparagine 215, histidine 306, and histidine 308.

It belongs to the metallophosphoesterase superfamily. A divalent metal cation serves as cofactor.

This is an uncharacterized protein from Helicobacter pylori (strain J99 / ATCC 700824) (Campylobacter pylori J99).